A 23-amino-acid polypeptide reads, in one-letter code: U22-ctenitoxin-Co1a (23 aa).

Expressed by the venom gland.

The protein localises to the secreted. The sequence is that of U22-ctenitoxin-Co1a from Ctenus ornatus (Brazilian spider).